A 232-amino-acid chain; its full sequence is LRRN4 C-terminal-like protein (232 aa).

Residues 1-22 (MPHSPCLLWLLAVTSLVPGTQP) form the signal peptide. At 23-189 (LVAGDLEGDE…RLTVPPRPLT (167 aa)) the chain is on the extracellular side. Residues 77-172 (PPHPPRLGEV…GAEGLDSADG (96 aa)) enclose the Fibronectin type-III domain. A glycan (N-linked (GlcNAc...) asparagine) is linked at asparagine 127. A helical membrane pass occupies residues 190–210 (LLHAAMGVGSALALLSCSALV). Over 211-232 (WHFCLRQRWGCPRRGRPSHAGL) the chain is Cytoplasmic.

It is found in the membrane. The sequence is that of LRRN4 C-terminal-like protein (LRRN4CL) from Bos taurus (Bovine).